A 154-amino-acid polypeptide reads, in one-letter code: Bacterial ferritin (154 aa).

Residues 1 to 145 (MQGNQAVVDY…QQLRLIELIG (145 aa)) form the Ferritin-like diiron domain. The Fe cation site is built by glutamate 18, glutamate 51, histidine 54, glutamate 93, glutamate 127, and histidine 130.

Belongs to the bacterioferritin family. Forms a bacterioferritin (BFR) complex with BfrB. Heterooligomer of 24 subunits, arranged as 12 dimers, that are packed together to form an approximately spherical molecule with a central cavity, in which large amounts of iron can be deposited.

The protein resides in the cytoplasm. The catalysed reaction is 4 Fe(2+) + O2 + 4 H(+) = 4 Fe(3+) + 2 H2O. The enzyme catalyses Fe(2+)(in) = Fe(2+)(out). Iron-storage protein. Its ferroxidase center binds Fe(2+), oxidizes it using dioxygen to Fe(3+), and participates in the subsequent Fe(3+) oxide mineral core formation within the central cavity of the BFR protein shell. Plays a role in protection against iron-mediated oxidative stress. The chain is Bacterial ferritin from Neisseria gonorrhoeae.